The following is a 497-amino-acid chain: uncharacterized protein (497 aa).

Positions 474-497 (DPRNPFSNGKPSGWSDEDVAWLKR) are disordered. A compositionally biased stretch (acidic residues) spans 488–497 (SDEDVAWLKR).

This is an uncharacterized protein from Bacillus anthracis.